Consider the following 145-residue polypeptide: Glycine-rich protein (145 aa).

Residues 1 to 19 form the signal peptide; sequence MKLTLAVVVVFAYIATTNA.

In terms of tissue distribution, component of the acid-insoluble and acid-soluble organic matrix of calcified layers of the shell (at protein level).

The protein resides in the secreted. The sequence is that of Glycine-rich protein from Lottia gigantea (Giant owl limpet).